The sequence spans 133 residues: Helix-loop-helix protein 1 (133 aa).

Positions Met-1–Thr-78 are disordered. Over residues Asp-25 to Asp-39 the composition is skewed to gly residues. Over residues Glu-52 to Glu-65 the composition is skewed to basic and acidic residues. Over residues Arg-66–Thr-78 the composition is skewed to basic residues. A bHLH domain is found at Lys-75–Leu-127.

In terms of assembly, efficient DNA binding requires dimerization with another bHLH protein.

It is found in the nucleus. In terms of biological role, may serve as DNA-binding protein and may be involved in the control of cell-type determination, possibly within the developing nervous system. This is Helix-loop-helix protein 1 (Nhlh1) from Mus musculus (Mouse).